We begin with the raw amino-acid sequence, 160 residues long: DNA polymerase delta subunit 4 (160 aa).

Residues 1–48 are disordered; sequence MKKRTTQAKKSGQNTNIRDVFPHVVRSNSSQSHIGKKVSSEQSPTPDV. The span at 8 to 17 shows a compositional bias: polar residues; it reads AKKSGQNTNI.

The protein belongs to the DNA polymerase delta subunit 4 family. In terms of assembly, heterotetramer that consist of the pol3, cdc1, cdc27 and cdm1 subunits. Interacts with cdc1 and pol3.

Its subcellular location is the nucleus. In terms of biological role, appears to have a role in the stabilization of the DNA polymerase delta complex. The sequence is that of DNA polymerase delta subunit 4 (cdm1) from Schizosaccharomyces pombe (strain 972 / ATCC 24843) (Fission yeast).